Consider the following 213-residue polypeptide: Glycerol-3-phosphate acyltransferase (213 aa).

Transmembrane regions (helical) follow at residues 3 to 23 (IIIL…GLWI), 48 to 68 (ILGV…GTLA), 71 to 91 (LPLI…LAVI), 119 to 139 (PFFL…FSMI), 144 to 164 (VVAA…GFIL), and 165 to 185 (TSYD…IIFR).

Belongs to the PlsY family. In terms of assembly, probably interacts with PlsX.

The protein resides in the cell membrane. The catalysed reaction is an acyl phosphate + sn-glycerol 3-phosphate = a 1-acyl-sn-glycero-3-phosphate + phosphate. It functions in the pathway lipid metabolism; phospholipid metabolism. Catalyzes the transfer of an acyl group from acyl-phosphate (acyl-PO(4)) to glycerol-3-phosphate (G3P) to form lysophosphatidic acid (LPA). This enzyme utilizes acyl-phosphate as fatty acyl donor, but not acyl-CoA or acyl-ACP. The sequence is that of Glycerol-3-phosphate acyltransferase from Lactococcus lactis subsp. cremoris (strain MG1363).